An 89-amino-acid polypeptide reads, in one-letter code: UPF0147 protein STK_04605 (89 aa).

Belongs to the UPF0147 family.

In Sulfurisphaera tokodaii (strain DSM 16993 / JCM 10545 / NBRC 100140 / 7) (Sulfolobus tokodaii), this protein is UPF0147 protein STK_04605.